The following is an 872-amino-acid chain: Alanine--tRNA ligase (872 aa).

Zn(2+) is bound by residues His-567, His-571, Cys-669, and His-673.

Belongs to the class-II aminoacyl-tRNA synthetase family. It depends on Zn(2+) as a cofactor.

The protein localises to the cytoplasm. The catalysed reaction is tRNA(Ala) + L-alanine + ATP = L-alanyl-tRNA(Ala) + AMP + diphosphate. Its function is as follows. Catalyzes the attachment of alanine to tRNA(Ala) in a two-step reaction: alanine is first activated by ATP to form Ala-AMP and then transferred to the acceptor end of tRNA(Ala). Also edits incorrectly charged Ser-tRNA(Ala) and Gly-tRNA(Ala) via its editing domain. The protein is Alanine--tRNA ligase of Streptococcus agalactiae serotype Ia (strain ATCC 27591 / A909 / CDC SS700).